The sequence spans 173 residues: Nascent polypeptide-associated complex subunit alpha (173 aa).

An NAC-A/B domain is found at valine 21 to alanine 85. A disordered region spans residues asparagine 89–alanine 117. Phosphoserine is present on serine 122. Residues valine 134–leucine 171 enclose the UBA domain.

Belongs to the NAC-alpha family. In terms of assembly, part of the nascent polypeptide-associated complex (NAC), consisting of ucp15 and btf3. NAC associates with ribosomes via btf3.

The protein localises to the cytoplasm. It localises to the nucleus. Component of the nascent polypeptide-associated complex (NAC), a dynamic component of the ribosomal exit tunnel, protecting the emerging polypeptides from interaction with other cytoplasmic proteins to ensure appropriate nascent protein targeting. The NAC complex also promotes mitochondrial protein import by enhancing productive ribosome interactions with the outer mitochondrial membrane and blocks the inappropriate interaction of ribosomes translating non-secretory nascent polypeptides with translocation sites in the membrane of the endoplasmic reticulum. Ucp15 may also be involved in transcription regulation. This chain is Nascent polypeptide-associated complex subunit alpha (egd2), found in Schizosaccharomyces pombe (strain 972 / ATCC 24843) (Fission yeast).